The sequence spans 134 residues: Cytochrome b5 (134 aa).

A Cytochrome b5 heme-binding domain is found at Thr-6–Val-82. Heme-binding residues include His-41 and His-65. Positions Arg-86–Glu-105 are disordered. Over residues Thr-87 to Glu-105 the composition is skewed to polar residues. The helical transmembrane segment at Trp-111–Gly-131 threads the bilayer.

The protein belongs to the cytochrome b5 family.

It is found in the endoplasmic reticulum membrane. Its subcellular location is the microsome membrane. Cytochrome b5 is a membrane-bound hemoprotein which functions as an electron carrier for several membrane-bound oxygenases. This Drosophila melanogaster (Fruit fly) protein is Cytochrome b5 (Cyt-b5).